We begin with the raw amino-acid sequence, 406 residues long: Dematin (406 aa).

Disordered stretches follow at residues 1–30 (MERL…PSSI) and 78–333 (LPRS…DRGN). Residues 11 to 29 (SPGSVSSSRDSSVPGSPSS) are compositionally biased toward low complexity. A phosphoserine mark is found at Ser16, Ser18, Ser26, Ser92, Ser96, Ser105, Ser110, Ser113, Ser157, and Ser227. A compositionally biased stretch (polar residues) spans 105–114 (SPGTISQASA). Positions 217 to 228 (EEEEEEEDDDSG) are enriched in acidic residues. Residues 225 to 309 (DDSGEEMKAL…SRLQSTDFSP (85 aa)) are interaction with RASGRF2. Basic and acidic residues-rich tracts occupy residues 229–243 (EEMK…EELS) and 253–262 (ILKEEMEKSL). A phosphoserine mark is found at Ser270, Ser280, Ser290, Ser304, Ser316, Ser334, Ser373, and Ser384. A compositionally biased stretch (polar residues) spans 282 to 323 (HAGTSKSSSLPAYGRTTLSRLQSTDFSPSGSEAESPGLQNGE). An HP domain is found at 338-406 (VLEQKIYPYE…NELKKKASLF (69 aa)). At Ser404 the chain carries Phosphoserine; by PKA.

This sequence belongs to the villin/gelsolin family. Monomeric; under reducing conditions. Self-associates. Exists under oxidizing condition as a trimer linked by disulfide bonds. Found in a complex with DMTN, F-actin and spectrin. Found in a complex with ADD2, DMTN and SLC2A1. Interacts with F-actin, ITPKB and spectrin. Interacts with SLC2A1 (via C-terminus cytoplasmic region). Interacts with RASGRF2. Phosphorylated. Phosphorylation at Ser-404 by PKA causes the C-terminal headpiece domain to associate with the N-terminal core domain, and leads to the inhibition of its actin bundling activity.

The protein localises to the cytoplasm. It localises to the cytosol. Its subcellular location is the perinuclear region. The protein resides in the cytoskeleton. It is found in the cell membrane. The protein localises to the membrane. It localises to the endomembrane system. Its subcellular location is the cell projection. Its function is as follows. Membrane-cytoskeleton-associated protein with F-actin-binding activity that induces F-actin bundles formation and stabilization. Its F-actin-bundling activity is reversibly regulated upon its phosphorylation by the cAMP-dependent protein kinase A (PKA). Binds to the erythrocyte membrane glucose transporter-1 SLC2A1/GLUT1, and hence stabilizes and attaches the spectrin-actin network to the erythrocytic plasma membrane. Plays a role in maintaining the functional integrity of PKA-activated erythrocyte shape and the membrane mechanical properties. Also plays a role as a modulator of actin dynamics in fibroblasts; acts as a negative regulator of the RhoA activation pathway. In platelets, functions as a regulator of internal calcium mobilization across the dense tubular system that affects platelet granule secretion pathways and aggregation. Also required for the formation of a diverse set of cell protrusions, such as filopodia and lamellipodia, necessary for platelet cell spreading, motility and migration. Acts as a tumor suppressor and inhibits malignant cell transformation. The sequence is that of Dematin (DMTN) from Bos taurus (Bovine).